Here is a 227-residue protein sequence, read N- to C-terminus: MMLHIPGVLTKEQVAQCRDILDAADWTDGNATSGAQSALAKRNRQLPEGSPAARAAGDAIQDALACNALFFSAALPLKVFPPLFNRYAGGDAFGTHVDNAIRLLRGTDFRVRSDLSATLFLEEPEHYDGGELCVEDTYGVHRAKLPAGDMVLYPASSLHHVTPVTRGARVASFFWIQSMVRDDADRTLLYQLDTQIQRLTAEKGGRDASVIALTGIYHNLLRRWADA.

A Fe2OG dioxygenase domain is found at K78–S178. The Fe cation site is built by H96, D98, and H159. Position 169 (R169) interacts with 2-oxoglutarate.

It depends on Fe(2+) as a cofactor. L-ascorbate serves as cofactor.

This chain is PKHD-type hydroxylase BPSS1206, found in Burkholderia pseudomallei (strain K96243).